A 156-amino-acid chain; its full sequence is Small ribosomal subunit protein uS7 (156 aa).

It belongs to the universal ribosomal protein uS7 family. Part of the 30S ribosomal subunit. Contacts proteins S9 and S11.

One of the primary rRNA binding proteins, it binds directly to 16S rRNA where it nucleates assembly of the head domain of the 30S subunit. Is located at the subunit interface close to the decoding center, probably blocks exit of the E-site tRNA. This Nitrosospira multiformis (strain ATCC 25196 / NCIMB 11849 / C 71) protein is Small ribosomal subunit protein uS7.